The sequence spans 255 residues: Small ribosomal subunit protein eS1B (255 aa).

Ala2 carries the post-translational modification N-acetylalanine; partial. A Phosphoserine modification is found at Ser245. Lys248 is covalently cross-linked (Glycyl lysine isopeptide (Lys-Gly) (interchain with G-Cter in ubiquitin)). Position 254 is a phosphothreonine (Thr254).

It belongs to the eukaryotic ribosomal protein eS1 family. In terms of assembly, component of the small ribosomal subunit. Mature ribosomes consist of a small (40S) and a large (60S) subunit. The 40S subunit contains about 33 different proteins and 1 molecule of RNA (18S). The 60S subunit contains about 49 different proteins and 3 molecules of RNA (25S, 5.8S and 5S).

The protein localises to the cytoplasm. This is Small ribosomal subunit protein eS1B from Saccharomyces cerevisiae (strain JAY291) (Baker's yeast).